Here is a 339-residue protein sequence, read N- to C-terminus: Isopentenyl-diphosphate delta-isomerase (339 aa).

7-8 (RK) serves as a coordination point for substrate. Residues S65, 66 to 68 (SMT), S96, and N125 contribute to the FMN site. 96–98 (SQR) lines the substrate pocket. Q160 serves as a coordination point for substrate. E161 serves as a coordination point for Mg(2+). FMN contacts are provided by residues K192, T222, and 293–294 (AG).

Belongs to the IPP isomerase type 2 family. Homooctamer. Dimer of tetramers. FMN is required as a cofactor. NADPH serves as cofactor. The cofactor is Mg(2+).

The protein localises to the cytoplasm. It carries out the reaction isopentenyl diphosphate = dimethylallyl diphosphate. In terms of biological role, involved in the biosynthesis of isoprenoids. Catalyzes the 1,3-allylic rearrangement of the homoallylic substrate isopentenyl (IPP) to its allylic isomer, dimethylallyl diphosphate (DMAPP). In Vibrio campbellii (strain ATCC BAA-1116), this protein is Isopentenyl-diphosphate delta-isomerase.